The primary structure comprises 156 residues: Bursicon (156 aa).

Residues 1–26 (MYALDFLFIAFVYFAACHIQEKPVRA) form the signal peptide. 5 cysteine pairs are disulfide-bonded: C37-C86, C51-C100, C61-C121, C65-C123, and C83-C126. The region spanning 37 to 127 (CQMTPVIHIL…PLECMCRPCG (91 aa)) is the CTCK domain.

As to quaternary structure, heterodimer of burs and pburs.

It localises to the secreted. Functionally, final heterodimeric neurohormone released at the end of the molting cycle, involved in the sclerotization (tanning) of the insect cuticle, melanization and wing spreading. This Manduca sexta (Tobacco hawkmoth) protein is Bursicon.